Here is a 121-residue protein sequence, read N- to C-terminus: Ubiquitin-related modifier 1 (121 aa).

Gly121 carries the post-translational modification 1-thioglycine. Residue Gly121 forms a Glycyl lysine isopeptide (Gly-Lys) (interchain with K-? in acceptor proteins) linkage.

It belongs to the URM1 family. C-terminal thiocarboxylation occurs in 2 steps, it is first acyl-adenylated (-COAMP) via the hesA/moeB/thiF part of UBA4, then thiocarboxylated (-COSH) via the rhodanese domain of UBA4.

The protein resides in the cytoplasm. It participates in tRNA modification; 5-methoxycarbonylmethyl-2-thiouridine-tRNA biosynthesis. In terms of biological role, acts as a sulfur carrier required for 2-thiolation of mcm(5)S(2)U at tRNA wobble positions of cytosolic tRNA(Lys), tRNA(Glu) and tRNA(Gln). Serves as sulfur donor in tRNA 2-thiolation reaction by being thiocarboxylated (-COSH) at its C-terminus by the MOCS3 homolog UBA4. The sulfur is then transferred to tRNA to form 2-thiolation of mcm(5)S(2)U. Prior mcm(5) tRNA modification by the elongator complex is required for 2-thiolation. Also acts as a ubiquitin-like protein (UBL) that is covalently conjugated via an isopeptide bond to lysine residues of target proteins such as AHP1. The thiocarboxylated form serves as substrate for conjugation and oxidative stress specifically induces the formation of UBL-protein conjugates. The sequence is that of Ubiquitin-related modifier 1 from Ajellomyces capsulatus (strain NAm1 / WU24) (Darling's disease fungus).